Reading from the N-terminus, the 214-residue chain is Probable septum site-determining protein MinC (214 aa).

Belongs to the MinC family. In terms of assembly, interacts with MinD and FtsZ.

Its function is as follows. Cell division inhibitor that blocks the formation of polar Z ring septums. Rapidly oscillates between the poles of the cell to destabilize FtsZ filaments that have formed before they mature into polar Z rings. Prevents FtsZ polymerization. This chain is Probable septum site-determining protein MinC, found in Thermoanaerobacter pseudethanolicus (strain ATCC 33223 / 39E) (Clostridium thermohydrosulfuricum).